Here is a 600-residue protein sequence, read N- to C-terminus: Elongation factor 4 (600 aa).

Positions 5–187 (SRIRNFSIIA…DLIKKIPPPK (183 aa)) constitute a tr-type G domain. Residues 17 to 22 (DHGKST) and 134 to 137 (NKMD) each bind GTP.

The protein belongs to the TRAFAC class translation factor GTPase superfamily. Classic translation factor GTPase family. LepA subfamily.

Its subcellular location is the cell inner membrane. It catalyses the reaction GTP + H2O = GDP + phosphate + H(+). Required for accurate and efficient protein synthesis under certain stress conditions. May act as a fidelity factor of the translation reaction, by catalyzing a one-codon backward translocation of tRNAs on improperly translocated ribosomes. Back-translocation proceeds from a post-translocation (POST) complex to a pre-translocation (PRE) complex, thus giving elongation factor G a second chance to translocate the tRNAs correctly. Binds to ribosomes in a GTP-dependent manner. The polypeptide is Elongation factor 4 (Marinobacter nauticus (strain ATCC 700491 / DSM 11845 / VT8) (Marinobacter aquaeolei)).